A 656-amino-acid polypeptide reads, in one-letter code: Tetratricopeptide repeat protein 30 homolog (656 aa).

TPR repeat units follow at residues 9–42 (EGEF…NPKN), 43–76 (LAAL…FPQY), 141–174 (AAVI…SGYQ), 176–208 (GLAY…GVKD), 238–271 (IEAF…NEHD), 378–412 (RKTA…DDSL), 416–449 (LPVL…CKEH), 451–484 (TWKL…KYDD), and 537–570 (SIIS…PEKK).

This sequence belongs to the TTC30/dfy-1/fleer family. Component of the IFT complex B composed of at least che-2, che-13, dyf-1, dyf-3, dyf-6, dyf-11, dyf-13, ift-20, ift-74, ift-81, ifta-2, osm-1, osm-5 and osm-6. Expressed in most amphid, both phasmid and several labial-quadrant neurons.

The protein localises to the cell projection. It is found in the cilium. Plays a role in anterograde intraflagellar transport (IFT), the process by which cilia precursors are transported from the base of the cilium to the site of their incorporation at the tip. Specifically required for the kinesin osm-3 to dock onto and move the IFT particles which contain these precursors. Component of the intraflagellar transport (IFT) complex B required for transport of proteins in the motile cilium. May be required for ciliary entrance and transport of specific ciliary cargo proteins such as che-3 which are related to motility. Required for polyglutamylation of axonemal tubulin in sensory cilia. In Caenorhabditis elegans, this protein is Tetratricopeptide repeat protein 30 homolog.